Reading from the N-terminus, the 98-residue chain is NADH-ubiquinone oxidoreductase chain 4L (98 aa).

The next 3 membrane-spanning stretches (helical) occupy residues 1 to 21 (MTTMFFNLLLAFMVALMGVYI), 29 to 49 (TLLCLEGMMLSIFIMVSLTLL), and 59 to 79 (FPLILLVFSACEAGVGLALLV).

The protein belongs to the complex I subunit 4L family. As to quaternary structure, core subunit of respiratory chain NADH dehydrogenase (Complex I) which is composed of 45 different subunits.

Its subcellular location is the mitochondrion inner membrane. The catalysed reaction is a ubiquinone + NADH + 5 H(+)(in) = a ubiquinol + NAD(+) + 4 H(+)(out). Functionally, core subunit of the mitochondrial membrane respiratory chain NADH dehydrogenase (Complex I) which catalyzes electron transfer from NADH through the respiratory chain, using ubiquinone as an electron acceptor. Part of the enzyme membrane arm which is embedded in the lipid bilayer and involved in proton translocation. The chain is NADH-ubiquinone oxidoreductase chain 4L (MT-ND4L) from Zaglossus bruijni (Western long-beaked echidna).